Reading from the N-terminus, the 2084-residue chain is RNA-directed RNA polymerase L (2084 aa).

Residues 20–221 (EPGLYDQIYD…IELQKSEEEL (202 aa)) are endonuclease. Residues H80, D112, and E126 each coordinate Mn(2+). Residue K145 is the For endonuclease activity of the active site. The RdRp catalytic domain maps to 969-1172 (SARSLGPGSI…FGIYSSEKST (204 aa)). D1127 is a binding site for Mg(2+). The cap-binding stretch occupies residues 1695–1810 (AQSGTLGGFS…TDGCPVRIME (116 aa)).

This sequence belongs to the Bunyavirales RNA polymerase family. Homomultimer. Interacts with the glycoprotein N; this interaction allows efficient polymerase packaging into virus particles. Interacts with nucleoprotein N. Mn(2+) is required as a cofactor. It depends on Mg(2+) as a cofactor.

Its subcellular location is the host Golgi apparatus. The protein resides in the host endoplasmic reticulum. It localises to the host endoplasmic reticulum-Golgi intermediate compartment. The protein localises to the virion. It catalyses the reaction RNA(n) + a ribonucleoside 5'-triphosphate = RNA(n+1) + diphosphate. Inhibited by Baloxavir acid (BXA). In terms of biological role, RNA-dependent RNA polymerase, which is responsible for the replication and transcription of the viral RNA genome using antigenomic RNA as an intermediate. During transcription, synthesizes subgenomic RNAs and assures their capping by a cap-snatching mechanism, which involves the endonuclease activity cleaving the host capped pre-mRNAs. These short capped RNAs are then used as primers for viral transcription. The 3'-end of subgenomic mRNAs molecules are not polyadenylated. During replication, the polymerase binds the 5' and 3' vRNA extremities at distinct sites. In turn, significant conformational changes occur in the polymerase and in vRNA to initiate active RNA synthesis. As a consequence of the use of the same enzyme for both transcription and replication, these mechanisms need to be well coordinated. This is RNA-directed RNA polymerase L from Dabie bandavirus (Severe fever with thrombocytopenia virus).